Reading from the N-terminus, the 220-residue chain is Iron-sulfur cluster repair protein YtfE (220 aa).

It belongs to the RIC family. YtfE subfamily. Homodimer.

The protein resides in the cytoplasm. Its function is as follows. Di-iron-containing protein involved in the repair of iron-sulfur clusters damaged by oxidative and nitrosative stress conditions. The protein is Iron-sulfur cluster repair protein YtfE of Salmonella paratyphi A (strain AKU_12601).